The following is a 219-amino-acid chain: 2-hydroxy-3-keto-5-methylthiopentenyl-1-phosphate phosphatase (219 aa).

Belongs to the HAD-like hydrolase superfamily. MtnX family.

The catalysed reaction is 2-hydroxy-5-methylsulfanyl-3-oxopent-1-enyl phosphate + H2O = 1,2-dihydroxy-5-(methylsulfanyl)pent-1-en-3-one + phosphate. The protein operates within amino-acid biosynthesis; L-methionine biosynthesis via salvage pathway; L-methionine from S-methyl-5-thio-alpha-D-ribose 1-phosphate: step 4/6. In terms of biological role, dephosphorylates 2-hydroxy-3-keto-5-methylthiopentenyl-1-phosphate (HK-MTPenyl-1-P) yielding 1,2-dihydroxy-3-keto-5-methylthiopentene (DHK-MTPene). This chain is 2-hydroxy-3-keto-5-methylthiopentenyl-1-phosphate phosphatase, found in Bacillus cytotoxicus (strain DSM 22905 / CIP 110041 / 391-98 / NVH 391-98).